The chain runs to 666 residues: MLPEASSLWLLRLLRDVQLAQFYRPILEELNVTRPEHFDFVRPEDLDNIGMGRPAQRRLNEALKRYRSGVKSKNWVYKILGGFAPEQKEIPPRSDSPLCFHEPEGGLKCLIPEGAVRRGELLGSGCFGVVHRGLWTLPSGQSIPVAVKSLRVGPEGPMGTELGDFLREVSVMMKLEHPHVLRLHGLVLGQPLQMVMELAPLGSLHARLTAPAPTPPLPVALLCLFLRQLAGAMAYLGSCGLVHRDLATRNLLLASPRMIKVADFGLVRPLGGARGRYVMGGPRPIPYAWCAPESLRQGAFSSASDVWMFGVTLWEMFSGGEEPWAGVPPYLILQRLEKDRARLPKPPLCSRALYSLALRCWAPHPADRPSFSNLEGLLQEAWLSEGRCVREVTEPGALRMEPGDPITIIEGSLDTATWKGQNGRTLKVGNFPASAVTLADLGGSPVTHPAHRGSPAHGEKCRGGTDGDREKATLQDLPPARSHRTKMPLQRMRGISKSLESVLSLGPRPTGGGSSPPELRRTRAMPQRLPDLPPRPPDLPPRPPIICNSSQPTQPHKARPKRESSHNHRTGAPGASKATVPSGGPLSDPEWQRKVVEVELSVHGVTYQECQVALRTTGGDVASAIRNLKVDQLFHLSNRSRADCRRILEHHQWDLSAASRYILARS.

Serine 96 is subject to Phosphoserine. One can recognise a Protein kinase domain in the interval 116–383 (VRRGELLGSG…LEGLLQEAWL (268 aa)). ATP-binding positions include 122–130 (LGSGCFGVV) and lysine 148. Catalysis depends on aspartate 245, which acts as the Proton acceptor. Phosphoserine is present on serine 255. One can recognise an SH3 domain in the interval 381–441 (AWLSEGRCVR…PASAVTLADL (61 aa)). Residues 442-589 (GGSPVTHPAH…VPSGGPLSDP (148 aa)) are disordered. Residues 457–473 (HGEKCRGGTDGDREKAT) show a composition bias toward basic and acidic residues. Residue serine 498 is modified to Phosphoserine. A Phosphothreonine modification is found at threonine 510. Serine 515 bears the Phosphoserine mark. Residues 531-544 (DLPPRPPDLPPRPP) show a composition bias toward pro residues. Serine 582 carries the phosphoserine modification.

The protein belongs to the protein kinase superfamily. Tyr protein kinase family. As to quaternary structure, interacts with the SH3 domain of PLCG1 via its Pro-rich domain. Post-translationally, autophosphorylated on tyrosine residues. In terms of tissue distribution, expressed in whole embryo and all adult tissues examined including liver, kidney, heart, brain, skeletal muscle and intestine. Also detected in various myeloid- and lymphoid-derived cell lines.

It is found in the membrane. The protein localises to the cytoplasm. It carries out the reaction L-tyrosyl-[protein] + ATP = O-phospho-L-tyrosyl-[protein] + ADP + H(+). Functionally, may function in signaling pathways utilized broadly during fetal development and more selectively in adult tissues and in cells of the lymphohematopoietic system. Could specifically be involved in phospholipid signal transduction. Involved in negative regulation of cell growth. Has tumor suppressor properties. Plays a negative regulatory role in the Ras-MAPK pathway. The polypeptide is Non-receptor tyrosine-protein kinase TNK1 (Mus musculus (Mouse)).